Reading from the N-terminus, the 428-residue chain is Diaminopimelate decarboxylase (428 aa).

Position 64 is an N6-(pyridoxal phosphate)lysine (K64). Pyridoxal 5'-phosphate contacts are provided by residues G239 and 281–284; that span reads EPGR. R284, R319, and Y323 together coordinate substrate. The active-site Proton donor is the C350. 2 residues coordinate substrate: E351 and Y379. Residue Y379 participates in pyridoxal 5'-phosphate binding.

The protein belongs to the Orn/Lys/Arg decarboxylase class-II family. LysA subfamily. Homodimer. Pyridoxal 5'-phosphate serves as cofactor.

The catalysed reaction is meso-2,6-diaminopimelate + H(+) = L-lysine + CO2. The protein operates within amino-acid biosynthesis; L-lysine biosynthesis via DAP pathway; L-lysine from DL-2,6-diaminopimelate: step 1/1. Its function is as follows. Specifically catalyzes the decarboxylation of meso-diaminopimelate (meso-DAP) to L-lysine. The protein is Diaminopimelate decarboxylase of Methanothermobacter thermautotrophicus (strain ATCC 29096 / DSM 1053 / JCM 10044 / NBRC 100330 / Delta H) (Methanobacterium thermoautotrophicum).